Here is a 220-residue protein sequence, read N- to C-terminus: Thiopurine S-methyltransferase (220 aa).

4 residues coordinate S-adenosyl-L-methionine: tryptophan 10, leucine 45, glutamate 66, and arginine 123.

The protein belongs to the class I-like SAM-binding methyltransferase superfamily. TPMT family.

The protein localises to the cytoplasm. The catalysed reaction is S-adenosyl-L-methionine + a thiopurine = S-adenosyl-L-homocysteine + a thiopurine S-methylether.. The protein is Thiopurine S-methyltransferase of Pseudomonas syringae pv. syringae (strain B728a).